Here is a 257-residue protein sequence, read N- to C-terminus: Putative cysteine-rich repeat secretory protein 28 (257 aa).

An N-terminal signal peptide occupies residues 1 to 26 (MFSTFGSVPILTVVAIQLFLIRNVLS). 2 consecutive Gnk2-homologous domains span residues 32-136 (AYLH…TVDS) and 142-254 (YEND…LYPF).

This sequence belongs to the cysteine-rich repeat secretory protein family.

It localises to the secreted. The chain is Putative cysteine-rich repeat secretory protein 28 (CRRSP28) from Arabidopsis thaliana (Mouse-ear cress).